The chain runs to 150 residues: MGRFIFLSSGLLVVFLSLSGTGADQGCLPDWTLYEGYCYKVFKEKKTWADAEKFCKEQANGGHLVSLQSSEEVDFMVHQTFPILRYDFVWIGLSDFSRDCQWKWSDYSKLFYKAWNNEPNCFVCKTTDNQWLRRDCNRQQYFVCKSRVPR.

Residues 1–23 (MGRFIFLSSGLLVVFLSLSGTGA) form the signal peptide. 3 disulfides stabilise this stretch: Cys27–Cys38, Cys55–Cys144, and Cys121–Cys136. The C-type lectin domain maps to 34 to 145 (YEGYCYKVFK…CNRQQYFVCK (112 aa)).

It belongs to the snaclec family. In terms of assembly, heterodimer; disulfide-linked. Expressed by the venom gland.

It localises to the secreted. In terms of biological role, antagonist of the alpha-2 subunit of the integrin alpha-2/beta-1 (ITGA2/ITGB1) on human platelets and endothelial cells. This protein inhibits collagen-stimulated activation of human platelets in a dose-dependent manner. In addition, it antagonizes the binding of monoclonal antibodies against the alpha-2 subunit of integrin alpha-2/beta-1 to platelets and it coimmunoprecipitates with this integrin. The sequence is that of Snaclec rhinocetin subunit beta from Bitis rhinoceros (West African gaboon viper).